Consider the following 692-residue polypeptide: Elongation factor G (692 aa).

In terms of domain architecture, tr-type G spans 8-283 (EDYRNFGIMA…AVVDYLPSPV (276 aa)). GTP-binding positions include 17 to 24 (AHIDAGKT), 81 to 85 (DTPGH), and 135 to 138 (NKMD).

Belongs to the TRAFAC class translation factor GTPase superfamily. Classic translation factor GTPase family. EF-G/EF-2 subfamily.

Its subcellular location is the cytoplasm. Catalyzes the GTP-dependent ribosomal translocation step during translation elongation. During this step, the ribosome changes from the pre-translocational (PRE) to the post-translocational (POST) state as the newly formed A-site-bound peptidyl-tRNA and P-site-bound deacylated tRNA move to the P and E sites, respectively. Catalyzes the coordinated movement of the two tRNA molecules, the mRNA and conformational changes in the ribosome. The polypeptide is Elongation factor G (Caulobacter vibrioides (strain ATCC 19089 / CIP 103742 / CB 15) (Caulobacter crescentus)).